The sequence spans 61 residues: Small ribosomal subunit protein uS14 (61 aa).

Positions 24, 27, 40, and 43 each coordinate Zn(2+).

It belongs to the universal ribosomal protein uS14 family. Zinc-binding uS14 subfamily. In terms of assembly, part of the 30S ribosomal subunit. Contacts proteins S3 and S10. Requires Zn(2+) as cofactor.

In terms of biological role, binds 16S rRNA, required for the assembly of 30S particles and may also be responsible for determining the conformation of the 16S rRNA at the A site. The polypeptide is Small ribosomal subunit protein uS14 (Aliarcobacter butzleri (strain RM4018) (Arcobacter butzleri)).